The following is a 229-amino-acid chain: MAKISKKLFAAYEGIDKQKAYPLFDAIKLAQEKSITKFDGSINIAIKLNLDTTKVEQQLRGSISLPNGNGKNVRVLVLSEDITKEEAASVGADYFGGADYIQNIEKMLNQIDVIITNQKMMPLLAKLGKVLGPRGLMPNPKIGTVTNDVLKAVEEFKRGRIEYRTDTYGNIHMSIGRVSFETTKIEENANALLNLIKSKKPATVKGQYIQNIAVSPTMGPGIKVVINNN.

It belongs to the universal ribosomal protein uL1 family. Part of the 50S ribosomal subunit.

Its function is as follows. Binds directly to 23S rRNA. The L1 stalk is quite mobile in the ribosome, and is involved in E site tRNA release. Protein L1 is also a translational repressor protein, it controls the translation of the L11 operon by binding to its mRNA. The sequence is that of Large ribosomal subunit protein uL1 from Ureaplasma parvum serovar 3 (strain ATCC 27815 / 27 / NCTC 11736).